Consider the following 316-residue polypeptide: Transaldolase (316 aa).

K127 acts as the Schiff-base intermediate with substrate in catalysis.

The protein belongs to the transaldolase family. Type 2 subfamily.

It is found in the cytoplasm. It catalyses the reaction D-sedoheptulose 7-phosphate + D-glyceraldehyde 3-phosphate = D-erythrose 4-phosphate + beta-D-fructose 6-phosphate. Its pathway is carbohydrate degradation; pentose phosphate pathway; D-glyceraldehyde 3-phosphate and beta-D-fructose 6-phosphate from D-ribose 5-phosphate and D-xylulose 5-phosphate (non-oxidative stage): step 2/3. In terms of biological role, transaldolase is important for the balance of metabolites in the pentose-phosphate pathway. The protein is Transaldolase of Helicobacter pylori (strain HPAG1).